The chain runs to 305 residues: ATP synthase gamma chain (305 aa).

The protein belongs to the ATPase gamma chain family. F-type ATPases have 2 components, CF(1) - the catalytic core - and CF(0) - the membrane proton channel. CF(1) has five subunits: alpha(3), beta(3), gamma(1), delta(1), epsilon(1). CF(0) has three main subunits: a, b and c.

The protein localises to the cell membrane. In terms of biological role, produces ATP from ADP in the presence of a proton gradient across the membrane. The gamma chain is believed to be important in regulating ATPase activity and the flow of protons through the CF(0) complex. The protein is ATP synthase gamma chain of Streptomyces avermitilis (strain ATCC 31267 / DSM 46492 / JCM 5070 / NBRC 14893 / NCIMB 12804 / NRRL 8165 / MA-4680).